Reading from the N-terminus, the 493-residue chain is MSRNDWEVVIGLEVHAQLNTASKIFSAASTAFGAEPNVQASAVDIALPGVLPVLNGGAVERAIRFGVAIGATVAPKSVFARKNYFYPDLPKGYQISQFELPVVQGGAITIRVGDGDKAYEKTVQLTRAHLEEDAGKSLHEDFHGMSGIDLNRAGTPLLEIVSEPDMRSSAEAVAYARALHALVRWIDICDGNMQEGSFRCDANVSVRRPGGPLGTRREIKNLNSFRFLQQAIDFEVQWQIGTIEDGGRIQQATVLFDPDTGETRMMRSKEDAHDYRYFPDPDLLPLVIPSEWIARVRSEMPELPGAMKARFINDYGLSAYDAASLTAAKEIAAYYQAMLATADTKPGSQVPKLGANWVMGELAAQLNRAERDIGDSPVTPAQLAGLVQRIADGTISNNIARKVFAALWNGEGGSGADAADRIIEAQGLRQVNDSSALEPLIDEVLAANRKSVDEFRAGKEKAFNALVGQVMKASRGKANPAQVNEMLKRKLDA.

The protein belongs to the GatB/GatE family. GatB subfamily. As to quaternary structure, heterotrimer of A, B and C subunits.

The catalysed reaction is L-glutamyl-tRNA(Gln) + L-glutamine + ATP + H2O = L-glutaminyl-tRNA(Gln) + L-glutamate + ADP + phosphate + H(+). The enzyme catalyses L-aspartyl-tRNA(Asn) + L-glutamine + ATP + H2O = L-asparaginyl-tRNA(Asn) + L-glutamate + ADP + phosphate + 2 H(+). Functionally, allows the formation of correctly charged Asn-tRNA(Asn) or Gln-tRNA(Gln) through the transamidation of misacylated Asp-tRNA(Asn) or Glu-tRNA(Gln) in organisms which lack either or both of asparaginyl-tRNA or glutaminyl-tRNA synthetases. The reaction takes place in the presence of glutamine and ATP through an activated phospho-Asp-tRNA(Asn) or phospho-Glu-tRNA(Gln). This is Aspartyl/glutamyl-tRNA(Asn/Gln) amidotransferase subunit B from Aromatoleum aromaticum (strain DSM 19018 / LMG 30748 / EbN1) (Azoarcus sp. (strain EbN1)).